A 695-amino-acid polypeptide reads, in one-letter code: DUF724 domain-containing protein 3 (695 aa).

The segment at 376 to 464 is disordered; that stretch reads ITVTPLKQQD…GTSDTIRVDD (89 aa). The segment covering 384–402 has biased composition (basic and acidic residues); the sequence is QDAETEGKKSPKKTPEPVK. Polar residues predominate over residues 434-459; that stretch reads NQNSNLNETDETCNVSKAGVNGTSDT. The DUF724 domain occupies 509–694; it reads PFTKNLPFWK…LEFITSVLAP (186 aa). Residues 614–684 adopt a coiled-coil conformation; sequence VEERKCLEKR…TIDQEIANVE (71 aa).

Homodimer.

May be involved in the polar growth of plant cells via transportation of RNAs. The chain is DUF724 domain-containing protein 3 from Arabidopsis thaliana (Mouse-ear cress).